Reading from the N-terminus, the 293-residue chain is Elongation factor Ts (293 aa).

The tract at residues 80–83 (TDFV) is involved in Mg(2+) ion dislocation from EF-Tu.

The protein belongs to the EF-Ts family.

It localises to the cytoplasm. In terms of biological role, associates with the EF-Tu.GDP complex and induces the exchange of GDP to GTP. It remains bound to the aminoacyl-tRNA.EF-Tu.GTP complex up to the GTP hydrolysis stage on the ribosome. The sequence is that of Elongation factor Ts from Burkholderia multivorans (strain ATCC 17616 / 249).